Here is a 149-residue protein sequence, read N- to C-terminus: D-aminoacyl-tRNA deacylase (149 aa).

The short motif at 137-138 (GP) is the Gly-cisPro motif, important for rejection of L-amino acids element.

This sequence belongs to the DTD family. Homodimer.

It is found in the cytoplasm. The enzyme catalyses glycyl-tRNA(Ala) + H2O = tRNA(Ala) + glycine + H(+). It carries out the reaction a D-aminoacyl-tRNA + H2O = a tRNA + a D-alpha-amino acid + H(+). An aminoacyl-tRNA editing enzyme that deacylates mischarged D-aminoacyl-tRNAs. Also deacylates mischarged glycyl-tRNA(Ala), protecting cells against glycine mischarging by AlaRS. Acts via tRNA-based rather than protein-based catalysis; rejects L-amino acids rather than detecting D-amino acids in the active site. By recycling D-aminoacyl-tRNA to D-amino acids and free tRNA molecules, this enzyme counteracts the toxicity associated with the formation of D-aminoacyl-tRNA entities in vivo and helps enforce protein L-homochirality. The sequence is that of D-aminoacyl-tRNA deacylase from Clostridium botulinum (strain 657 / Type Ba4).